A 436-amino-acid chain; its full sequence is Xylose isomerase (436 aa).

Catalysis depends on residues His100 and Asp103. Residues Glu231, Glu267, His270, Asp295, Asp306, Asp308, and Asp338 each contribute to the Mg(2+) site.

Belongs to the xylose isomerase family. As to quaternary structure, homotetramer. The cofactor is Mg(2+).

The protein resides in the cytoplasm. The catalysed reaction is alpha-D-xylose = alpha-D-xylulofuranose. The polypeptide is Xylose isomerase (Agrobacterium fabrum (strain C58 / ATCC 33970) (Agrobacterium tumefaciens (strain C58))).